The following is a 160-amino-acid chain: Protein-export protein SecB (160 aa).

This sequence belongs to the SecB family. In terms of assembly, homotetramer, a dimer of dimers. One homotetramer interacts with 1 SecA dimer.

The protein localises to the cytoplasm. One of the proteins required for the normal export of preproteins out of the cell cytoplasm. It is a molecular chaperone that binds to a subset of precursor proteins, maintaining them in a translocation-competent state. It also specifically binds to its receptor SecA. This is Protein-export protein SecB from Burkholderia lata (strain ATCC 17760 / DSM 23089 / LMG 22485 / NCIMB 9086 / R18194 / 383).